Reading from the N-terminus, the 59-residue chain is Large ribosomal subunit protein uL30 (59 aa).

Belongs to the universal ribosomal protein uL30 family. In terms of assembly, part of the 50S ribosomal subunit.

The polypeptide is Large ribosomal subunit protein uL30 (Hydrogenobaculum sp. (strain Y04AAS1)).